Here is a 471-residue protein sequence, read N- to C-terminus: 5-hydroxytryptamine receptor 2A (471 aa).

Residues 1 to 80 (MDILCEENTS…LQEKNWSALL (80 aa)) lie on the Extracellular side of the membrane. N-linked (GlcNAc...) asparagine glycosylation is present at N38. The chain crosses the membrane as a helical span at residues 81–97 (TAVVIILTIAGNILVIM). The Cytoplasmic portion of the chain corresponds to 98 to 111 (AVSLEKKLQNATNY). Residues 112–137 (FLMSLAIADMLLGFLVMPVSMLTILY) form a helical membrane-spanning segment. Residues 138 to 146 (GYRWPLPSK) are Extracellular-facing. The chain crosses the membrane as a helical span at residues 147-171 (LCAVWIYLDVLFSTASIMHLCAISL). An intrachain disulfide couples C148 to C227. D155 is a serotonin binding site. A DRY motif; important for ligand-induced conformation changes motif is present at residues 172–174 (DRY). Over 172–191 (DRYVAIQNPIHHSRFNSRTK) the chain is Cytoplasmic. The helical transmembrane segment at 192–215 (AFLKIIAVWTISVGISMPIPVFGL) threads the bilayer. Residues 216 to 232 (QDDSKVFKEGSCLLADD) are Extracellular-facing. Residues 233–258 (NFVLIGSFVSFFIPLTIMVITYFLTI) traverse the membrane as a helical segment. Residues 259–322 (KSLQKEATLC…QSISNEQKAC (64 aa)) lie on the Cytoplasmic side of the membrane. S280 carries the post-translational modification Phosphoserine. Residues 323–348 (KVLGIVFSLFVVMWCPFFITNIMAVI) form a helical membrane-spanning segment. Serotonin is bound at residue N343. A disulfide bond links C349 and C353. Over 349–356 (CKESCNED) the chain is Extracellular. A helical transmembrane segment spans residues 357–382 (VIGALLNVFVWIGYLSSAVNPLVYTL). The NPxxY motif; important for ligand-induced conformation changes and signaling motif lies at 376-380 (NPLVY). Topologically, residues 383–471 (FNKTYRSAFS…DGVNEKVSCV (89 aa)) are cytoplasmic. The disordered stretch occupies residues 450–471 (KQHSEDASKDNSDGVNEKVSCV). The span at 451–465 (QHSEDASKDNSDGVN) shows a compositional bias: basic and acidic residues. Residues 469 to 471 (SCV) carry the PDZ-binding motif.

Belongs to the G-protein coupled receptor 1 family. Interacts (via C-terminus) with MPDZ and PATJ. May interact (via C-terminus) with MPP3, PRDX6, DLG4, DLG1, CASK, APBA1 and MAGI2. Interacts with GRM2 and DRD2; this may affect signaling.

It localises to the cell membrane. Its subcellular location is the cell projection. The protein resides in the dendrite. The protein localises to the axon. It is found in the cytoplasmic vesicle. It localises to the membrane. Its subcellular location is the caveola. The protein resides in the presynapse. Its activity is regulated as follows. G-protein coupled receptor activity is regulated by lipids: oleamide increases HTR2A-mediated activity. Its function is as follows. G-protein coupled receptor for 5-hydroxytryptamine (serotonin). Also functions as a receptor for various drugs and psychoactive substances, including mescaline, psilocybin, 1-(2,5-dimethoxy-4-iodophenyl)-2-aminopropane (DOI) and lysergic acid diethylamide (LSD). Ligand binding causes a conformation change that triggers signaling via guanine nucleotide-binding proteins (G proteins) and modulates the activity of downstream effectors. HTR2A is coupled to G(q)/G(11) G alpha proteins and activates phospholipase C-beta, releasing diacylglycerol (DAG) and inositol 1,4,5-trisphosphate (IP3) second messengers that modulate the activity of phosphatidylinositol 3-kinase and promote the release of Ca(2+) ions from intracellular stores, respectively. Beta-arrestin family members inhibit signaling via G proteins and mediate activation of alternative signaling pathways. Affects neural activity, perception, cognition and mood. Plays a role in the regulation of behavior, including responses to anxiogenic situations and psychoactive substances. Plays a role in intestinal smooth muscle contraction, and may play a role in arterial vasoconstriction. The sequence is that of 5-hydroxytryptamine receptor 2A (HTR2A) from Pongo pygmaeus (Bornean orangutan).